Consider the following 290-residue polypeptide: Membrane protein insertase YidC (290 aa).

An N-terminal signal peptide occupies residues Met-1–Gly-19. Cys-20 carries N-palmitoyl cysteine lipidation. Cys-20 carries the S-diacylglycerol cysteine lipid modification. 5 helical membrane-spanning segments follow: residues Tyr-56–Leu-76, Met-134–Leu-154, Pro-176–Ser-196, Gly-207–Ser-224, and Leu-229–Tyr-251. Positions His-270 to Lys-290 are disordered.

Belongs to the OXA1/ALB3/YidC family. Type 2 subfamily.

The protein resides in the cell membrane. Functionally, required for the insertion and/or proper folding and/or complex formation of integral membrane proteins into the membrane. Involved in integration of membrane proteins that insert both dependently and independently of the Sec translocase complex, as well as at least some lipoproteins. This Staphylococcus aureus (strain Mu3 / ATCC 700698) protein is Membrane protein insertase YidC.